Reading from the N-terminus, the 121-residue chain is Large ribosomal subunit protein uL14 (121 aa).

The protein belongs to the universal ribosomal protein uL14 family. In terms of assembly, part of the 50S ribosomal subunit. Forms a cluster with proteins L3 and L19. In the 70S ribosome, L14 and L19 interact and together make contacts with the 16S rRNA in bridges B5 and B8.

Binds to 23S rRNA. Forms part of two intersubunit bridges in the 70S ribosome. This Bacteroides fragilis (strain ATCC 25285 / DSM 2151 / CCUG 4856 / JCM 11019 / LMG 10263 / NCTC 9343 / Onslow / VPI 2553 / EN-2) protein is Large ribosomal subunit protein uL14.